A 142-amino-acid chain; its full sequence is Ribonuclease VapC25 (142 aa).

The PINc domain occupies 3 to 139 (LIDVNVLLAA…ARFASVRHIR (137 aa)). Aspartate 5 and aspartate 108 together coordinate Mg(2+).

The protein belongs to the PINc/VapC protein family. It depends on Mg(2+) as a cofactor.

Toxic component of a type II toxin-antitoxin (TA) system. An RNase. Upon expression in M.smegmatis inhibits colony formation. Its toxic effect is neutralized by coexpression with cognate antitoxin VapB25. The protein is Ribonuclease VapC25 of Mycobacterium tuberculosis (strain ATCC 25618 / H37Rv).